We begin with the raw amino-acid sequence, 399 residues long: 3-dehydroquinate synthase (399 aa).

The protein belongs to the archaeal-type DHQ synthase family.

It carries out the reaction 2-amino-2,3,7-trideoxy-D-lyxo-hept-6-ulosonate + NAD(+) + H2O = 3-dehydroquinate + NH4(+) + NADH + H(+). Functionally, catalyzes the oxidative deamination and cyclization of 2-amino-3,7-dideoxy-D-threo-hept-6-ulosonic acid (ADH) to yield 3-dehydroquinate (DHQ), which is fed into the canonical shikimic pathway of aromatic amino acid biosynthesis. This Haloquadratum walsbyi (strain DSM 16790 / HBSQ001) protein is 3-dehydroquinate synthase.